The sequence spans 85 residues: MDPKKIARINELAKKKKTEGLTAEEKVEQAKLREEYIEGYRRSVRHHIEGIKIVDEDGNDVTPEKLRQVQREKGLHGRSLDDPNS.

Positions 56–85 (EDGNDVTPEKLRQVQREKGLHGRSLDDPNS) are disordered. Positions 62 to 85 (TPEKLRQVQREKGLHGRSLDDPNS) are enriched in basic and acidic residues.

Belongs to the UPF0291 family.

It localises to the cytoplasm. In Streptococcus gordonii (strain Challis / ATCC 35105 / BCRC 15272 / CH1 / DL1 / V288), this protein is UPF0291 protein SGO_0570.